Reading from the N-terminus, the 192-residue chain is C-X-C chemokine receptor type 4 (192 aa).

Y1 carries the post-translational modification Sulfotyrosine. The segment at 1 to 11 (YTEDDLGSGDY) is important for chemokine binding and signaling. Over 1–28 (YTEDDLGSGDYDSMKEPCFREENAHFNR) the chain is Extracellular. S8 carries an O-linked (Xyl...) (chondroitin sulfate) serine glycan. Sulfotyrosine is present on Y11. A helical membrane pass occupies residues 29–53 (IFLPTVYSIIFLTGIVGNGLVILVM). The Cytoplasmic segment spans residues 54-67 (GYQKKLRSMTDKYR). A helical transmembrane segment spans residues 68–89 (LHLSVADLLFVLTLPFWAVDAV). The interval 84–87 (WAVD) is chemokine binding. Over 90–100 (ANWYFGQFLCK) the chain is Extracellular. The cysteines at positions 99 and 176 are disulfide-linked. Residues 101 to 120 (AVHVIYTVNLYSSVLILAFI) traverse the membrane as a helical segment. The segment at 103–107 (HVIYT) is chemokine binding. Residues 121–144 (SLDRYLAIVHATNSQRPRKLLAEK) lie on the Cytoplasmic side of the membrane. An Important for signaling motif is present at residues 123–125 (DRY). The segment at 125 to 137 (YLAIVHATNSQRP) is involved in dimerization; when bound to chemokine. A helical membrane pass occupies residues 145 to 164 (VVYVGVWLPAVLLTIPDLIF). Residues 165–185 (ADIKEADERYICDRFYPSDLW) lie on the Extracellular side of the membrane. Positions 176 to 180 (CDRFY) are chemokine binding, important for signaling. A helical transmembrane segment spans residues 186 to 192 (LVVFQFQ).

The protein belongs to the G-protein coupled receptor 1 family. As to quaternary structure, monomer. Can form homodimers. Interacts with CD164. Interacts with ARRB2; the interaction is dependent on the C-terminal phosphorylation of CXCR4 and allows activation of MAPK1 and MAPK3. Interacts with ARR3; the interaction is dependent on the C-terminal phosphorylation of CXCR4 and modulates calcium mobilization. Interacts with RNF113A; the interaction, enhanced by CXCL12, promotes CXCR4 ubiquitination and subsequent degradation. Interacts (via the cytoplasmic C-terminal) with ITCH (via the WW domains I and II); the interaction, enhanced by CXCL12, promotes CXCR4 ubiquitination and leads to its degradation. Interacts with extracellular ubiquitin. Interacts with DBN1; this interaction is enhanced by antigenic stimulation. Following LPS binding, may form a complex with GDF5, HSP90AA1 and HSPA8. Post-translationally, phosphorylated on agonist stimulation. Rapidly phosphorylated on serine and threonine residues in the C-terminal. In terms of processing, ubiquitinated after ligand binding, leading to its degradation. Ubiquitinated by ITCH at the cell membrane on agonist stimulation. The ubiquitin-dependent mechanism, endosomal sorting complex required for transport (ESCRT), then targets CXCR4 for lysosomal degradation. This process is dependent also on prior Ser-/Thr-phosphorylation in the C-terminal of CXCR4. Also binding of ARRB1 to STAM negatively regulates CXCR4 sorting to lysosomes though modulating ubiquitination of SFR5S. Sulfation is required for efficient binding of CXCL12/SDF-1alpha and promotes its dimerization. Post-translationally, O- and N-glycosylated. N-glycosylation can mask coreceptor function. The O-glycosylation chondroitin sulfate attachment does not affect interaction with CXCL12/SDF-1alpha nor its coreceptor activity.

It localises to the cell membrane. Its subcellular location is the cell junction. The protein resides in the early endosome. The protein localises to the late endosome. It is found in the lysosome. Its function is as follows. Receptor for the C-X-C chemokine CXCL12/SDF-1 that transduces a signal by increasing intracellular calcium ion levels and enhancing MAPK1/MAPK3 activation. Involved in the AKT signaling cascade. Plays a role in regulation of cell migration, e.g. during wound healing. Acts as a receptor for extracellular ubiquitin; leading to enhanced intracellular calcium ions and reduced cellular cAMP levels. Binds bacterial lipopolysaccharide (LPS) et mediates LPS-induced inflammatory response, including TNF secretion by monocytes. Involved in hematopoiesis and in cardiac ventricular septum formation. Also plays an essential role in vascularization of the gastrointestinal tract, probably by regulating vascular branching and/or remodeling processes in endothelial cells. Involved in cerebellar development. In the CNS, could mediate hippocampal-neuron survival. In Ovis aries (Sheep), this protein is C-X-C chemokine receptor type 4 (CXCR4).